A 302-amino-acid polypeptide reads, in one-letter code: O-antigen biosynthesis glycosyltransferase WbnK (302 aa).

This sequence belongs to the glycosyltransferase 11 family.

The catalysed reaction is beta-D-Gal-(1-&gt;3)-alpha-D-GalNAc-(1-&gt;3)-alpha-D-GalNAc-di-trans,octa-cis-undecaprenyl diphosphate + GDP-beta-L-fucose = alpha-L-Fuc-(1-&gt;2)-beta-D-Gal-(1-&gt;3)-alpha-D-GalNAc-(1-&gt;3)-alpha-D-GalNAc-di-trans,octa-cis-undecaprenyl diphosphate + GDP + H(+). It participates in bacterial outer membrane biogenesis; LPS O-antigen biosynthesis. Functionally, involved in the assembly of the O-repeating unit during O-antigen biosynthesis. This is O-antigen biosynthesis glycosyltransferase WbnK from Escherichia coli.